The chain runs to 472 residues: Siroheme synthase 2 (472 aa).

The tract at residues M1–V204 is precorrin-2 dehydrogenase /sirohydrochlorin ferrochelatase. NAD(+)-binding positions include E22–V23 and C43–E44. At S128 the chain carries Phosphoserine. Residues G216–G472 form a uroporphyrinogen-III C-methyltransferase region. P225 contributes to the S-adenosyl-L-methionine binding site. The Proton acceptor role is filled by D248. K270 (proton donor) is an active-site residue. Residues G301 to D303, I306, T331 to A332, M382, and G411 contribute to the S-adenosyl-L-methionine site.

The protein in the N-terminal section; belongs to the precorrin-2 dehydrogenase / sirohydrochlorin ferrochelatase family. In the C-terminal section; belongs to the precorrin methyltransferase family.

It carries out the reaction uroporphyrinogen III + 2 S-adenosyl-L-methionine = precorrin-2 + 2 S-adenosyl-L-homocysteine + H(+). The catalysed reaction is precorrin-2 + NAD(+) = sirohydrochlorin + NADH + 2 H(+). The enzyme catalyses siroheme + 2 H(+) = sirohydrochlorin + Fe(2+). It functions in the pathway cofactor biosynthesis; adenosylcobalamin biosynthesis; precorrin-2 from uroporphyrinogen III: step 1/1. Its pathway is cofactor biosynthesis; adenosylcobalamin biosynthesis; sirohydrochlorin from precorrin-2: step 1/1. It participates in porphyrin-containing compound metabolism; siroheme biosynthesis; precorrin-2 from uroporphyrinogen III: step 1/1. The protein operates within porphyrin-containing compound metabolism; siroheme biosynthesis; siroheme from sirohydrochlorin: step 1/1. It functions in the pathway porphyrin-containing compound metabolism; siroheme biosynthesis; sirohydrochlorin from precorrin-2: step 1/1. Multifunctional enzyme that catalyzes the SAM-dependent methylations of uroporphyrinogen III at position C-2 and C-7 to form precorrin-2 via precorrin-1. Then it catalyzes the NAD-dependent ring dehydrogenation of precorrin-2 to yield sirohydrochlorin. Finally, it catalyzes the ferrochelation of sirohydrochlorin to yield siroheme. The chain is Siroheme synthase 2 from Yersinia enterocolitica serotype O:8 / biotype 1B (strain NCTC 13174 / 8081).